We begin with the raw amino-acid sequence, 31 residues long: GTIPCGESCVFIPCLTSALGCSCKSKVCYKN.

The segment at residues 1-31 (GTIPCGESCVFIPCLTSALGCSCKSKVCYKN) is a cross-link (cyclopeptide (Gly-Asn)). 3 disulfides stabilise this stretch: cysteine 5-cysteine 21, cysteine 9-cysteine 23, and cysteine 14-cysteine 28.

Post-translationally, this is a cyclic peptide.

Probably participates in a plant defense mechanism. This chain is Cyclotide vibi-F, found in Viola biflora (Yellow wood violet).